The chain runs to 211 residues: LexA repressor (211 aa).

The H-T-H motif DNA-binding region spans 28–48; that stretch reads VREVGEAVGLSSSSTIHGHIE. Residues serine 132 and lysine 170 each act as for autocatalytic cleavage activity in the active site.

The protein belongs to the peptidase S24 family. In terms of assembly, homodimer.

It catalyses the reaction Hydrolysis of Ala-|-Gly bond in repressor LexA.. Represses a number of genes involved in the response to DNA damage (SOS response), including recA and lexA. In the presence of single-stranded DNA, RecA interacts with LexA causing an autocatalytic cleavage which disrupts the DNA-binding part of LexA, leading to derepression of the SOS regulon and eventually DNA repair. This chain is LexA repressor, found in Leuconostoc citreum (strain KM20).